Here is a 631-residue protein sequence, read N- to C-terminus: Phosphomethylpyrimidine synthase (631 aa).

Residues Asn-239, Met-268, Tyr-297, His-333, Ser-353 to Gly-355, Asp-394 to Arg-397, and Glu-433 each bind substrate. Position 437 (His-437) interacts with Zn(2+). Tyr-460 is a binding site for substrate. His-501 is a Zn(2+) binding site. [4Fe-4S] cluster-binding residues include Cys-581, Cys-584, and Cys-589.

The protein belongs to the ThiC family. Homodimer. [4Fe-4S] cluster is required as a cofactor.

The enzyme catalyses 5-amino-1-(5-phospho-beta-D-ribosyl)imidazole + S-adenosyl-L-methionine = 4-amino-2-methyl-5-(phosphooxymethyl)pyrimidine + CO + 5'-deoxyadenosine + formate + L-methionine + 3 H(+). Its pathway is cofactor biosynthesis; thiamine diphosphate biosynthesis. Functionally, catalyzes the synthesis of the hydroxymethylpyrimidine phosphate (HMP-P) moiety of thiamine from aminoimidazole ribotide (AIR) in a radical S-adenosyl-L-methionine (SAM)-dependent reaction. The polypeptide is Phosphomethylpyrimidine synthase (Salmonella schwarzengrund (strain CVM19633)).